The sequence spans 99 residues: MPEISRDEVAHLAKLSRLALTDEELDRFAEQIDGIIGNVSAVQQVAAEGVEPMSHPHSIKTTMREDVVEQILTPEQALDQAPAVDQQRFVVPQILGEQD.

Belongs to the GatC family. In terms of assembly, heterotrimer of A, B and C subunits.

It carries out the reaction L-glutamyl-tRNA(Gln) + L-glutamine + ATP + H2O = L-glutaminyl-tRNA(Gln) + L-glutamate + ADP + phosphate + H(+). The catalysed reaction is L-aspartyl-tRNA(Asn) + L-glutamine + ATP + H2O = L-asparaginyl-tRNA(Asn) + L-glutamate + ADP + phosphate + 2 H(+). Allows the formation of correctly charged Asn-tRNA(Asn) or Gln-tRNA(Gln) through the transamidation of misacylated Asp-tRNA(Asn) or Glu-tRNA(Gln) in organisms which lack either or both of asparaginyl-tRNA or glutaminyl-tRNA synthetases. The reaction takes place in the presence of glutamine and ATP through an activated phospho-Asp-tRNA(Asn) or phospho-Glu-tRNA(Gln). The chain is Aspartyl/glutamyl-tRNA(Asn/Gln) amidotransferase subunit C from Corynebacterium diphtheriae (strain ATCC 700971 / NCTC 13129 / Biotype gravis).